The following is an 86-amino-acid chain: Putative membrane protein insertion efficiency factor (86 aa).

Belongs to the UPF0161 family.

The protein resides in the cell inner membrane. Could be involved in insertion of integral membrane proteins into the membrane. In Cellvibrio japonicus (strain Ueda107) (Pseudomonas fluorescens subsp. cellulosa), this protein is Putative membrane protein insertion efficiency factor.